An 87-amino-acid chain; its full sequence is Small ribosomal subunit protein bS20 (87 aa).

Residues 1 to 20 (MANIKSQIKRNKTNEKARLR) are disordered.

Belongs to the bacterial ribosomal protein bS20 family.

Its function is as follows. Binds directly to 16S ribosomal RNA. The polypeptide is Small ribosomal subunit protein bS20 (Corynebacterium efficiens (strain DSM 44549 / YS-314 / AJ 12310 / JCM 11189 / NBRC 100395)).